A 257-amino-acid chain; its full sequence is MIADLSLDADVAEQTQQTLGADSNFAQRHPLQIAVCLRQLVAGQDFVTVEFGGRQIVTQILDVDSRNARFVFDAGSVADDNDALPSARQLTFRSLPGGIRTEFTTFDATPTQFDGLPAFEAPLPTVLHYVQRREFFRVQTPVLDPYIASGRYADGGSFRLELLDLSLGGIALKTADERFGSLERGTVLRDVALQLGGFGMLRLDLEIVAPRQVSTAKGDRRFVIGCKFVATPGPAERTLQRVVTQLETRRQALTPRR.

The 114-residue stretch at 131–244 (QRREFFRVQT…AERTLQRVVT (114 aa)) folds into the PilZ domain.

This sequence belongs to the YcgR family. Monomer. Interacts with the flagellar basal bodies.

It is found in the bacterial flagellum basal body. In terms of biological role, acts as a flagellar brake, regulating swimming and swarming in a bis-(3'-5') cyclic diguanylic acid (c-di-GMP)-dependent manner. Binds 1 c-di-GMP dimer per subunit. Increasing levels of c-di-GMP lead to decreased motility. The polypeptide is Flagellar brake protein YcgR 2 (Paraburkholderia phytofirmans (strain DSM 17436 / LMG 22146 / PsJN) (Burkholderia phytofirmans)).